The chain runs to 224 residues: UPF0758 protein Maqu_3564 (224 aa).

The region spanning 102–224 is the MPN domain; the sequence is PLRSPADTRR…VISLAERGLM (123 aa). Zn(2+)-binding residues include His-173, His-175, and Asp-186. The short motif at 173-186 is the JAMM motif element; the sequence is HNHPSGVAEPSQAD.

This sequence belongs to the UPF0758 family.

The sequence is that of UPF0758 protein Maqu_3564 from Marinobacter nauticus (strain ATCC 700491 / DSM 11845 / VT8) (Marinobacter aquaeolei).